A 445-amino-acid polypeptide reads, in one-letter code: Tubulin beta-4 chain (445 aa).

8 residues coordinate GTP: Gln11, Glu69, Ser138, Gly142, Thr143, Gly144, Asn204, and Asn226. Residue Glu69 participates in Mg(2+) binding. Positions 421–445 (EYQQYQDATADEEYDEEEEEERDAE) are disordered. Residues 429–445 (TADEEYDEEEEEERDAE) show a composition bias toward acidic residues.

This sequence belongs to the tubulin family. As to quaternary structure, dimer of alpha and beta chains. A typical microtubule is a hollow water-filled tube with an outer diameter of 25 nm and an inner diameter of 15 nM. Alpha-beta heterodimers associate head-to-tail to form protofilaments running lengthwise along the microtubule wall with the beta-tubulin subunit facing the microtubule plus end conferring a structural polarity. Microtubules usually have 13 protofilaments but different protofilament numbers can be found in some organisms and specialized cells. Mg(2+) is required as a cofactor.

It localises to the cytoplasm. The protein localises to the cytoskeleton. Tubulin is the major constituent of microtubules, a cylinder consisting of laterally associated linear protofilaments composed of alpha- and beta-tubulin heterodimers. Microtubules grow by the addition of GTP-tubulin dimers to the microtubule end, where a stabilizing cap forms. Below the cap, tubulin dimers are in GDP-bound state, owing to GTPase activity of alpha-tubulin. The sequence is that of Tubulin beta-4 chain (TUBB4) from Triticum aestivum (Wheat).